The chain runs to 452 residues: Pup--protein ligase (452 aa).

Position 9 (Glu9) interacts with Mg(2+). Arg53 provides a ligand contact to ATP. Tyr55 contributes to the Mg(2+) binding site. Residue Asp57 is the Proton acceptor of the active site. Glu63 serves as a coordination point for Mg(2+). ATP is bound by residues Thr66 and Trp419.

This sequence belongs to the Pup ligase/Pup deamidase family. Pup-conjugating enzyme subfamily.

The catalysed reaction is ATP + [prokaryotic ubiquitin-like protein]-L-glutamate + [protein]-L-lysine = ADP + phosphate + N(6)-([prokaryotic ubiquitin-like protein]-gamma-L-glutamyl)-[protein]-L-lysine.. It participates in protein degradation; proteasomal Pup-dependent pathway. The protein operates within protein modification; protein pupylation. Its function is as follows. Catalyzes the covalent attachment of the prokaryotic ubiquitin-like protein modifier Pup to the proteasomal substrate proteins, thereby targeting them for proteasomal degradation. This tagging system is termed pupylation. The ligation reaction involves the side-chain carboxylate of the C-terminal glutamate of Pup and the side-chain amino group of a substrate lysine. This is Pup--protein ligase from Actinosynnema mirum (strain ATCC 29888 / DSM 43827 / JCM 3225 / NBRC 14064 / NCIMB 13271 / NRRL B-12336 / IMRU 3971 / 101).